The primary structure comprises 570 residues: Urease subunit alpha (570 aa).

The Urease domain maps to 131 to 570; it reads GGFDSHIHFI…LPMAQRYFMY (440 aa). 3 residues coordinate Ni(2+): His136, His138, and Lys219. Position 219 is an N6-carboxylysine (Lys219). Position 221 (His221) interacts with substrate. Ni(2+)-binding residues include His248 and His274. The active-site Proton donor is His322. Asp362 contributes to the Ni(2+) binding site.

This sequence belongs to the metallo-dependent hydrolases superfamily. Urease alpha subunit family. In terms of assembly, heterotrimer of UreA (gamma), UreB (beta) and UreC (alpha) subunits. Three heterotrimers associate to form the active enzyme. Requires Ni cation as cofactor. Post-translationally, carboxylation allows a single lysine to coordinate two nickel ions.

The protein resides in the cytoplasm. The catalysed reaction is urea + 2 H2O + H(+) = hydrogencarbonate + 2 NH4(+). Its pathway is nitrogen metabolism; urea degradation; CO(2) and NH(3) from urea (urease route): step 1/1. The polypeptide is Urease subunit alpha (Rhodopseudomonas palustris (strain BisB18)).